The primary structure comprises 502 residues: Lysine--tRNA ligase (502 aa).

The Mg(2+) site is built by Glu409 and Glu416.

This sequence belongs to the class-II aminoacyl-tRNA synthetase family. Homodimer. It depends on Mg(2+) as a cofactor.

Its subcellular location is the cytoplasm. It carries out the reaction tRNA(Lys) + L-lysine + ATP = L-lysyl-tRNA(Lys) + AMP + diphosphate. In Shouchella clausii (strain KSM-K16) (Alkalihalobacillus clausii), this protein is Lysine--tRNA ligase.